Here is a 167-residue protein sequence, read N- to C-terminus: Translationally-controlled tumor protein homolog (167 aa).

The TCTP domain occupies 1–167 (MIIYTDIISG…WKHGVKAEKI (167 aa)).

Belongs to the TCTP family.

The protein localises to the cytoplasm. The protein resides in the cytoskeleton. In terms of biological role, involved in protein synthesis. Involved in microtubule stabilization. The chain is Translationally-controlled tumor protein homolog from Kluyveromyces lactis (strain ATCC 8585 / CBS 2359 / DSM 70799 / NBRC 1267 / NRRL Y-1140 / WM37) (Yeast).